The following is a 164-amino-acid chain: Elicitin-like protein 2 (164 aa).

The signal sequence occupies residues 1–22 (MFSKTLVVLAAVAAVTVNGLTA). Disulfide bonds link cysteine 25–cysteine 91, cysteine 47–cysteine 76, and cysteine 71–cysteine 118. The interval 121–164 (ISGGGSTPTTAPPSGTTPTTPTTAPPTGTTPGVTPSPTTPKPAC) is disordered. The span at 127-156 (TPTTAPPSGTTPTTPTTAPPTGTTPGVTPS) shows a compositional bias: low complexity.

It belongs to the elicitin family.

It localises to the secreted. Induces local and distal defense responses (incompatible hypersensitive reaction) in plants from the solanaceae and cruciferae families. Elicits leaf necrosis and causes the accumulation of pathogenesis-related proteins. Might interact with the lipidic molecules of the plasma membrane. The chain is Elicitin-like protein 2 (POD-2) from Pythium oligandrum (Mycoparasitic fungus).